The following is a 255-amino-acid chain: 3-deoxy-manno-octulosonate cytidylyltransferase (255 aa).

The protein belongs to the KdsB family.

It localises to the cytoplasm. The catalysed reaction is 3-deoxy-alpha-D-manno-oct-2-ulosonate + CTP = CMP-3-deoxy-beta-D-manno-octulosonate + diphosphate. The protein operates within nucleotide-sugar biosynthesis; CMP-3-deoxy-D-manno-octulosonate biosynthesis; CMP-3-deoxy-D-manno-octulosonate from 3-deoxy-D-manno-octulosonate and CTP: step 1/1. It functions in the pathway bacterial outer membrane biogenesis; lipopolysaccharide biosynthesis. Activates KDO (a required 8-carbon sugar) for incorporation into bacterial lipopolysaccharide in Gram-negative bacteria. This chain is 3-deoxy-manno-octulosonate cytidylyltransferase, found in Hahella chejuensis (strain KCTC 2396).